We begin with the raw amino-acid sequence, 630 residues long: MAGLALRLVLAATLLGLAGSLDWKAASSLNPIEKCMEDHDYEQLLKVVTLGLNRTSKPQKVVVVGAGVAGLVAAKMLSDAGHKVTILEADNRIGGRIFTFRDEKTGWIGELGAMRMPSSHRILHKLCRTLGLNLTQFTQYDENTWTEVHNVKLRNYVVEKMPEKLGYNLNNRERGHSPEDIYQMALNKAFKDLKALGCKKAMNKFNKHTLLEYLLEEGNLSRPAVQLLGDVMSEEGFFYLSFAEALRAHACLSDRLRYSRIVGGWDLLPRALLSSLSGALLLNAPVVSITQGRNDVRVHIATSLHSEKTLTADVVLLTASGPALQRITFSPPLTRKRQEALRALHYVAASKVFLSFRRPFWHEEHIEGGHSNTDRPSRLIFYPARGEGSLLLASYTWSDAAAPFAGLSTDQTLRLVLQDVAALHGPVVFRLWDGRGVVKRWAEDPHSQGGFVVQPPLYGREAEDYDWSAPFGRIYFAGEHTALPHGWVETAVKSGLRAAVRINNNYGYGEVDPQMMEHAYAEANYLDQYPEGERPEEQQAREEVSPDEQEPSHKHLLVETSPEGQQHAFVEAIPELQGHVFVETVPQEKGHAHQNIYPSEHVQVHGEVIPEWHGHGGSGTPQMHRVGDHS.

Residues Met1–Leu21 form the signal peptide. A disulfide bridge links Cys35 with Cys198. N-linked (GlcNAc...) asparagine glycosylation is present at Asn53. Residues Val68–Ala69, Glu88–Ala89, Arg96, and Gly112–Arg115 contribute to the FAD site. A substrate-binding site is contributed by Arg115. N-linked (GlcNAc...) asparagine glycans are attached at residues Asn133 and Asn219. FAD is bound at residue Val286. A substrate-binding site is contributed by Tyr395. Residues Glu479 and Gly486–Ala491 contribute to the FAD site. Gly486–Trp487 provides a ligand contact to substrate. The tract at residues Gly532–Lys554 is disordered.

Belongs to the flavin monoamine oxidase family. FIG1 subfamily. FAD serves as cofactor. In terms of tissue distribution, primarily found in immune tissues. As to expression, primarily found in immune tissues, mostly in B-lymphocytes. Restricted to the testis, predominantly in Sertoli cells at the periphery of the ducts, and the brain, including Purkinje cells, hippocampus and mitral cells in the olfactory bulb. No isoform 2 expression in fetal tissues.

The protein localises to the secreted. It is found in the cytoplasmic vesicle. It localises to the secretory vesicle. Its subcellular location is the acrosome. The protein resides in the lysosome. The catalysed reaction is an L-alpha-amino acid + O2 + H2O = a 2-oxocarboxylate + H2O2 + NH4(+). The enzyme catalyses L-tryptophan + O2 + H2O = indole-3-pyruvate + H2O2 + NH4(+). It catalyses the reaction L-phenylalanine + O2 + H2O = 3-phenylpyruvate + H2O2 + NH4(+). It carries out the reaction L-tyrosine + O2 + H2O = 3-(4-hydroxyphenyl)pyruvate + H2O2 + NH4(+). The catalysed reaction is L-arginine + O2 + H2O = 5-guanidino-2-oxopentanoate + H2O2 + NH4(+). It participates in amino-acid degradation; L-tryptophan degradation via pyruvate pathway. In terms of biological role, secreted L-amino-acid oxidase that acts as a key immunoregulator. Has preference for L-aromatic amino acids: converts phenylalanine (Phe), tyrosine (Tyr) and tryptophan (Trp) to phenylpyruvic acid (PP), hydroxyphenylpyruvic acid (HPP), and indole-3-pyruvic acid (I3P), respectively. Also has weak L-arginine oxidase activity. Acts as a negative regulator of anti-tumor immunity by mediating Trp degradation via an indole pyruvate pathway that activates the transcription factor AHR. IL4I1-mediated Trp catabolism generates I3P, giving rise to indole metabolites (indole-3-acetic acid (IAA) and indole-3-aldehyde (I3A)) and kynurenic acid, which act as ligands for AHR, a ligand-activated transcription factor that plays important roles in immunity and cancer. AHR activation by indoles following IL4I1-mediated Trp degradation enhances tumor progression by promoting cancer cell motility and suppressing adaptive immunity. Also has an immunoregulatory function in some immune cell, probably by mediating Trp degradation and promoting downstream AHR activation: inhibits T-cell activation and proliferation, promotes the differentiation of naive CD4(+) T-cells into FOXP3(+) regulatory T-cells (Treg) and regulates the development and function of B-cells. Also regulates M2 macrophage polarization by inhibiting T-cell activation. Also has antibacterial properties by inhibiting growth of Gram negative and Gram positive bacteria through the production of NH4(+) and H2O2. The polypeptide is L-amino-acid oxidase (Mus musculus (Mouse)).